We begin with the raw amino-acid sequence, 1062 residues long: Zinc finger protein swm (1062 aa).

Positions 7 to 75 constitute a PWI domain; the sequence is DKLKDWLSVV…ERLFDAIASE (69 aa). Disordered regions lie at residues 119–145 and 171–340; these read ADSP…QASQ and KPAF…PDRV. The segment covering 134-145 has biased composition (polar residues); it reads DSNQVKLEQASQ. Positions 172-182 are enriched in basic and acidic residues; that stretch reads PAFDHKTKDSH. The span at 197-207 shows a compositional bias: low complexity; the sequence is SASPPGRSSGV. Gly residues predominate over residues 208–220; it reads SGSGGGGPGGAGL. Positions 234 to 249 are enriched in basic residues; sequence SRRRRASLRSRSRSRS. Composition is skewed to basic and acidic residues over residues 264–273 and 294–310; these read RRVNEREKTQ and RNFD…DRPR. Polar residues predominate over residues 322–340; sequence RSMSPERNARRNQNSPDRV. A C3H1-type zinc finger spans residues 363–391; it reads SHPRQRCRDFDEKGYCVRGETCPWDHGVN. The segment at 416–463 is disordered; that stretch reads EIWARSGGPPPGAGQGPVPPPTQPGQTTINPFSGNVRPTTLMSGSGPS. A compositionally biased stretch (pro residues) spans 423–438; that stretch reads GPPPGAGQGPVPPPTQ. The segment covering 444-461 has biased composition (polar residues); sequence INPFSGNVRPTTLMSGSG. Residues 561-635 enclose the RRM domain; the sequence is SSLELRKVPR…RFIKVFWHND (75 aa). Disordered regions lie at residues 666 to 704, 716 to 741, 822 to 847, 886 to 920, and 1004 to 1062; these read NVPA…QANT, TTTA…LNPA, QDQL…KEQQ, SAAN…PTRV, and APVE…SWRR. Residues 721 to 733 are compositionally biased toward gly residues; that stretch reads GSAGGAAGAGAPG. Residues 823 to 840 are compositionally biased toward low complexity; the sequence is DQLQAQMQQQQQQQQPPV. Residues 1018–1037 show a composition bias toward polar residues; sequence SLENPKQLIQSVSESESLLG. The span at 1046–1056 shows a compositional bias: acidic residues; that stretch reads LEDEEEDEESE.

It is found in the nucleus. Negatively regulates Hedgehog (hh) protein signal in wing development. Regulates neural-specific glycosylation by binding to FucTA mRNA and facilitating its nuclear export in neural cells. This chain is Zinc finger protein swm, found in Drosophila melanogaster (Fruit fly).